Reading from the N-terminus, the 339-residue chain is Homeobox protein Hox-D13 (339 aa).

Residues 1 to 33 are disordered; that stretch reads MSRSGTWDMDGLRADGGAAGAAPASSSSSVAAP. The span at 20–33 shows a compositional bias: low complexity; sequence GAAPASSSSSVAAP. A DNA-binding region (homeobox) is located at residues 272 to 331; the sequence is GRKKRVPYTKLQLKELENEYAINKFINKDKRRRISAATNLSERQVTIWFQNRRVKDKKIV.

The protein belongs to the Abd-B homeobox family.

The protein resides in the nucleus. Functionally, sequence-specific transcription factor that binds gene promoters and activates their transcription. Part of a developmental regulatory system that provides cells with specific positional identities on the anterior-posterior axis. The polypeptide is Homeobox protein Hox-D13 (Hoxd13) (Mus musculus (Mouse)).